The chain runs to 110 residues: Phosphoribosyl-AMP cyclohydrolase (110 aa).

Asp80 is a Mg(2+) binding site. Cys81 is a binding site for Zn(2+). The Mg(2+) site is built by Asp82 and Asp84. Cys97 and Cys104 together coordinate Zn(2+).

The protein belongs to the PRA-CH family. In terms of assembly, homodimer. It depends on Mg(2+) as a cofactor. Requires Zn(2+) as cofactor.

Its subcellular location is the cytoplasm. It carries out the reaction 1-(5-phospho-beta-D-ribosyl)-5'-AMP + H2O = 1-(5-phospho-beta-D-ribosyl)-5-[(5-phospho-beta-D-ribosylamino)methylideneamino]imidazole-4-carboxamide. It participates in amino-acid biosynthesis; L-histidine biosynthesis; L-histidine from 5-phospho-alpha-D-ribose 1-diphosphate: step 3/9. In terms of biological role, catalyzes the hydrolysis of the adenine ring of phosphoribosyl-AMP. In Clostridium botulinum (strain ATCC 19397 / Type A), this protein is Phosphoribosyl-AMP cyclohydrolase.